Consider the following 291-residue polypeptide: Asialoglycoprotein receptor 1 (291 aa).

Residues 1 to 19 (MTKECQDLQHLDNEESDHH) show a composition bias toward basic and acidic residues. Residues 1–27 (MTKECQDLQHLDNEESDHHQLRKGPPP) are disordered. At 1 to 40 (MTKECQDLQHLDNEESDHHQLRKGPPPSQPLLQRLCSGPR) the chain is on the cytoplasmic side. Residues 5-8 (CQDL) carry the Endocytosis signal motif. Phosphoserine is present on S16. C36 carries S-palmitoyl cysteine lipidation. The chain crosses the membrane as a helical; Signal-anchor for type II membrane protein span at residues 41–61 (LLLLSLGLSLLLLVVVCVIGS). Residues 61-123 (SQNSQLQKEL…KDLSEDHSSL (63 aa)) adopt a coiled-coil conformation. Residues 62–291 (QNSQLQKELR…DKASQEPPLL (230 aa)) are Extracellular-facing. N-linked (GlcNAc...) asparagine glycosylation is found at N79 and N147. Intrachain disulfides connect C154–C165, C182–C277, and C255–C269. The C-type lectin domain maps to 161–278 (HERSCYWFSR…CQRPYRWVCE (118 aa)). Ca(2+) contacts are provided by V191, E197, D216, Q240, D242, D243, E253, D254, N265, D266, and E278. S285 is subject to Phosphoserine.

As to quaternary structure, interacts with LASS2. In terms of processing, phosphorylated on a cytoplasmic Ser residue.

It is found in the membrane. Mediates the endocytosis of plasma glycoproteins to which the terminal sialic acid residue on their complex carbohydrate moieties has been removed. The receptor recognizes terminal galactose and N-acetylgalactosamine units. After ligand binding to the receptor, the resulting complex is internalized and transported to a sorting organelle, where receptor and ligand are disassociated. The receptor then returns to the cell membrane surface. This chain is Asialoglycoprotein receptor 1 (ASGR1), found in Pongo abelii (Sumatran orangutan).